A 244-amino-acid polypeptide reads, in one-letter code: MDLGLAGRRALVTGAGKGIGRSTVLALKAAGAQVVAVSRTREDLDDLVRECPGVEPVCVDLADWEATEQALSNVGPVDLLVNNAAVALLQPFLEVTKEACDTSFNVNLRAVIQVSQIVAKGMIARGVPGAIVNVSSQASQRALTNHTVYCSTKGALDMLTKMMALELGPHKIRVNAVNPTVVMTPMGRTNWSDPHKAKAMLDRIPLGKFAEVENVVDTILFLLSNRSGMTTGSTLPVDGGFLAT.

Methionine 1 is modified (N-acetylmethionine). 11–39 provides a ligand contact to NADP(+); that stretch reads LVTGAGKGIGRSTVLALKAAGAQVVAVSR. Arginine 21 is subject to Omega-N-methylarginine. Serine 136 lines the substrate pocket. Tyrosine 149 serves as the catalytic Proton acceptor. Lysine 153 is a catalytic residue.

This sequence belongs to the short-chain dehydrogenases/reductases (SDR) family. In terms of assembly, homotetramer. Highly expressed in kidney, liver and epididymis. Expressed at intermediate level in lung. Weakly or not expressed in brain, heart, spleen and testis.

It localises to the membrane. The protein resides in the apical cell membrane. It catalyses the reaction xylitol + NADP(+) = L-xylulose + NADPH + H(+). Functionally, catalyzes the NADPH-dependent reduction of several pentoses, tetroses, trioses, alpha-dicarbonyl compounds and L-xylulose. Participates in the uronate cycle of glucose metabolism. May play a role in the water absorption and cellular osmoregulation in the proximal renal tubules by producing xylitol, an osmolyte, thereby preventing osmolytic stress from occurring in the renal tubules. This chain is L-xylulose reductase (Dcxr), found in Mus musculus (Mouse).